The chain runs to 241 residues: B-cell receptor-associated protein 29 (241 aa).

At 1–6 (MTLQWA) the chain is on the lumenal side. Residues 7 to 27 (AVATFLYAEIGLILIFCLPFI) form a helical membrane-spanning segment. At 28 to 43 (PPQRWQKIFSFNVWGK) the chain is on the cytoplasmic side. The chain crosses the membrane as a helical span at residues 44–64 (IATFWNKAFLTIIILLIVLFL). Residues 65–103 (DAVREVRKYSSVHTIEKSSTSRPDAYEHTQMKLFRSQRN) are Lumenal-facing. The helical transmembrane segment at 104–124 (LYISGFSLFFWLVLRRLVTLI) threads the bilayer. The Cytoplasmic portion of the chain corresponds to 125–241 (TQLAKELSNK…RLERGNKKRL (117 aa)). The stretch at 166–233 (GKDEECVLEA…KEHSELQDRL (68 aa)) forms a coiled coil. The disordered stretch occupies residues 193–223 (KTSDALSKAQNDVMEMKMQSERLSKEYDQLL). The span at 206–223 (MEMKMQSERLSKEYDQLL) shows a compositional bias: basic and acidic residues. The short motif at 238-241 (KKRL) is the Di-lysine motif element.

This sequence belongs to the BCAP29/BCAP31 family. Homodimer and heterodimer with BCAP31. Binds CASP8 as a complex containing BCAP31, BCAP29, BCL2 and/or BCL2L1. Interacts with VAMP3, VAMP1 and membrane IgD immunoglobulins. May interact with ACTG1 and non-muscle myosin II.

The protein resides in the endoplasmic reticulum membrane. May play a role in anterograde transport of membrane proteins from the endoplasmic reticulum to the Golgi. May be involved in CASP8-mediated apoptosis. The sequence is that of B-cell receptor-associated protein 29 (BCAP29) from Pongo abelii (Sumatran orangutan).